A 198-amino-acid chain; its full sequence is Ribosome maturation factor RimP (198 aa).

This sequence belongs to the RimP family.

The protein resides in the cytoplasm. Functionally, required for maturation of 30S ribosomal subunits. In Rhizobium etli (strain CIAT 652), this protein is Ribosome maturation factor RimP.